A 380-amino-acid polypeptide reads, in one-letter code: MEPAIKYRLIKTDKHTGARLGEIITPHGTFPTPIFMPVGTQATVKAMSPEELEDLGADIILSNTYHLWVRPGEDIVKEGGGLHQFMNWKKGILTDSGGFQVFSLAKLRDITEEGVHFKNELNGANMFLSPEKAIQIENDLGPDIMMSFDECPPYFESYDYVKHSVERTSRWAERGLKAHRNPETQGLFGIIQGAGFEDLRRQSAKDLVSMDFPGYSIGGLSVGESKEEMNRVLDFTTQLIPENKPRYLMGVGSPDALIDGVLRGVDMFDCVLPTRIARNGTCMTSHGRLVVKNAKYARDFTPIDDNCQCYTCRNYTRAYIRHLIKTDETFGLRLTSIHNVYFLVHLMKDVRQAIMDDNLLEFRQNFFEEYGYNKENSKNF.

Asp95 acts as the Proton acceptor in catalysis. Residues 95–99, Asp149, Gln192, and Gly219 contribute to the substrate site; that span reads DSGGF. Residues 250–256 form an RNA binding region; the sequence is GVGSPDA. Asp269 (nucleophile) is an active-site residue. The RNA binding; important for wobble base 34 recognition stretch occupies residues 274 to 278; it reads TRIAR. Zn(2+) is bound by residues Cys307, Cys309, Cys312, and His338.

The protein belongs to the queuine tRNA-ribosyltransferase family. As to quaternary structure, homodimer. Within each dimer, one monomer is responsible for RNA recognition and catalysis, while the other monomer binds to the replacement base PreQ1. Requires Zn(2+) as cofactor.

The catalysed reaction is 7-aminomethyl-7-carbaguanine + guanosine(34) in tRNA = 7-aminomethyl-7-carbaguanosine(34) in tRNA + guanine. The protein operates within tRNA modification; tRNA-queuosine biosynthesis. Functionally, catalyzes the base-exchange of a guanine (G) residue with the queuine precursor 7-aminomethyl-7-deazaguanine (PreQ1) at position 34 (anticodon wobble position) in tRNAs with GU(N) anticodons (tRNA-Asp, -Asn, -His and -Tyr). Catalysis occurs through a double-displacement mechanism. The nucleophile active site attacks the C1' of nucleotide 34 to detach the guanine base from the RNA, forming a covalent enzyme-RNA intermediate. The proton acceptor active site deprotonates the incoming PreQ1, allowing a nucleophilic attack on the C1' of the ribose to form the product. After dissociation, two additional enzymatic reactions on the tRNA convert PreQ1 to queuine (Q), resulting in the hypermodified nucleoside queuosine (7-(((4,5-cis-dihydroxy-2-cyclopenten-1-yl)amino)methyl)-7-deazaguanosine). The chain is Queuine tRNA-ribosyltransferase from Pediococcus pentosaceus (strain ATCC 25745 / CCUG 21536 / LMG 10740 / 183-1w).